The chain runs to 193 residues: Glycerol-3-phosphate acyltransferase (193 aa).

Helical transmembrane passes span 2–22 (LIAL…GLIV), 76–96 (VPIH…FPVF), 112–132 (LLFY…VFLF), and 152–172 (CLFV…AFVI).

The protein belongs to the PlsY family. As to quaternary structure, probably interacts with PlsX.

The protein localises to the cell membrane. It catalyses the reaction an acyl phosphate + sn-glycerol 3-phosphate = a 1-acyl-sn-glycero-3-phosphate + phosphate. Its pathway is lipid metabolism; phospholipid metabolism. In terms of biological role, catalyzes the transfer of an acyl group from acyl-phosphate (acyl-PO(4)) to glycerol-3-phosphate (G3P) to form lysophosphatidic acid (LPA). This enzyme utilizes acyl-phosphate as fatty acyl donor, but not acyl-CoA or acyl-ACP. The chain is Glycerol-3-phosphate acyltransferase from Bacillus velezensis (strain DSM 23117 / BGSC 10A6 / LMG 26770 / FZB42) (Bacillus amyloliquefaciens subsp. plantarum).